The chain runs to 330 residues: MKKSFIHQQEEISFVKNTFTQYLKDKLEVVEVQGPILSKVGDGMQDNLSGVENPVSVKVLQIPDATYEVVHSLAKWKRHTLARFGFGEGEGLFVHMKALRPDEDSLDATHSVYVDQWDWEKVIPNGKRNIVYLKETVEKIYKAIRLTELAVEARYDIESILPKQITFIHTEELVERYPDLTSKERENAICKEFGAVFLIGIGGELPDGKPHDGRAPDYDDWTSESENGYKGLNGDILVWNESLGGAFELSSMGIRVDEETLRRQVEITGDEDRLELEWHKSLLNGLFPLTIGGGIGQSRMAMFLLRKRHIGEVQTSVWPQEVRDTYENIL.

Belongs to the class-II aminoacyl-tRNA synthetase family. AsnA subfamily.

It localises to the cytoplasm. The enzyme catalyses L-aspartate + NH4(+) + ATP = L-asparagine + AMP + diphosphate + H(+). It participates in amino-acid biosynthesis; L-asparagine biosynthesis; L-asparagine from L-aspartate (ammonia route): step 1/1. In Streptococcus pneumoniae serotype 2 (strain D39 / NCTC 7466), this protein is Aspartate--ammonia ligase.